The following is a 471-amino-acid chain: 3-isopropylmalate dehydratase large subunit (471 aa).

3 residues coordinate [4Fe-4S] cluster: Cys-349, Cys-409, and Cys-412.

Belongs to the aconitase/IPM isomerase family. LeuC type 1 subfamily. In terms of assembly, heterodimer of LeuC and LeuD. [4Fe-4S] cluster is required as a cofactor.

The enzyme catalyses (2R,3S)-3-isopropylmalate = (2S)-2-isopropylmalate. The protein operates within amino-acid biosynthesis; L-leucine biosynthesis; L-leucine from 3-methyl-2-oxobutanoate: step 2/4. Catalyzes the isomerization between 2-isopropylmalate and 3-isopropylmalate, via the formation of 2-isopropylmaleate. This Aliivibrio fischeri (strain MJ11) (Vibrio fischeri) protein is 3-isopropylmalate dehydratase large subunit.